Consider the following 98-residue polypeptide: Aspartyl/glutamyl-tRNA(Asn/Gln) amidotransferase subunit C (98 aa).

This sequence belongs to the GatC family. As to quaternary structure, heterotrimer of A, B and C subunits.

It carries out the reaction L-glutamyl-tRNA(Gln) + L-glutamine + ATP + H2O = L-glutaminyl-tRNA(Gln) + L-glutamate + ADP + phosphate + H(+). The catalysed reaction is L-aspartyl-tRNA(Asn) + L-glutamine + ATP + H2O = L-asparaginyl-tRNA(Asn) + L-glutamate + ADP + phosphate + 2 H(+). Its function is as follows. Allows the formation of correctly charged Asn-tRNA(Asn) or Gln-tRNA(Gln) through the transamidation of misacylated Asp-tRNA(Asn) or Glu-tRNA(Gln) in organisms which lack either or both of asparaginyl-tRNA or glutaminyl-tRNA synthetases. The reaction takes place in the presence of glutamine and ATP through an activated phospho-Asp-tRNA(Asn) or phospho-Glu-tRNA(Gln). The chain is Aspartyl/glutamyl-tRNA(Asn/Gln) amidotransferase subunit C from Arthrobacter sp. (strain FB24).